The chain runs to 206 residues: MSNESIKAEQDLIHEGVESEVSTEEASLIDELTQANFRIEELEQLLADALAKVDEQKDSVIRAAAEVDNIRRRAAMDVEKANKFALEKFANELLPVLDNMERALQGTNPQDETTKAIYEGVELTQKSLLTAVAKFGVKQIDPQGQAFNPDQHQAIGMQPSAEFPTNTVMLVMQKGYELNSRLLRPAMVMVSQGGPSQESASIDIEA.

Basic and acidic residues predominate over residues 1 to 17; that stretch reads MSNESIKAEQDLIHEGV. The disordered stretch occupies residues 1-20; that stretch reads MSNESIKAEQDLIHEGVESE.

This sequence belongs to the GrpE family. As to quaternary structure, homodimer.

The protein resides in the cytoplasm. Participates actively in the response to hyperosmotic and heat shock by preventing the aggregation of stress-denatured proteins, in association with DnaK and GrpE. It is the nucleotide exchange factor for DnaK and may function as a thermosensor. Unfolded proteins bind initially to DnaJ; upon interaction with the DnaJ-bound protein, DnaK hydrolyzes its bound ATP, resulting in the formation of a stable complex. GrpE releases ADP from DnaK; ATP binding to DnaK triggers the release of the substrate protein, thus completing the reaction cycle. Several rounds of ATP-dependent interactions between DnaJ, DnaK and GrpE are required for fully efficient folding. This Shewanella oneidensis (strain ATCC 700550 / JCM 31522 / CIP 106686 / LMG 19005 / NCIMB 14063 / MR-1) protein is Protein GrpE.